Consider the following 99-residue polypeptide: MDMFADNVVTLVDEEGREISFEMLDRVNYNGNDYIVLLPLEEMEKEDEEAEVVILRIEDRDGEEVYVGVEDEEELENVFEIFQSRFDDEDFDMYDDDEE.

The protein belongs to the UPF0473 family.

The sequence is that of UPF0473 protein Athe_1150 from Caldicellulosiruptor bescii (strain ATCC BAA-1888 / DSM 6725 / KCTC 15123 / Z-1320) (Anaerocellum thermophilum).